We begin with the raw amino-acid sequence, 521 residues long: AAA ATPase forming ring-shaped complexes (521 aa).

Positions 4-44 form a coiled coil; that stretch reads TEDLAALNDRLMAKNHALAEALSRAGKELTKAKSQLAQLAQ. 235-240 serves as a coordination point for ATP; it reads GNGKTM.

The protein belongs to the AAA ATPase family. Homohexamer. Assembles into a hexameric ring structure.

The chain is AAA ATPase forming ring-shaped complexes from Bifidobacterium longum (strain NCC 2705).